Consider the following 343-residue polypeptide: Cysteine proteinase 1 (343 aa).

The first 18 residues, 1–18 (MKVILLFVLAVFTVFVSS), serve as a signal peptide directing secretion. A propeptide spans 19–117 (RGIPLEEQSQ…DYLDDEFINS (99 aa)) (activation peptide). Intrachain disulfides connect cysteine 139/cysteine 190, cysteine 173/cysteine 224, and cysteine 279/cysteine 332. Cysteine 142 is a catalytic residue. Residues histidine 286 and asparagine 311 contribute to the active site.

The protein belongs to the peptidase C1 family. Post-translationally, phosphoglycosylated, contains GlcNAc-alpha-1-P-Ser residues.

The protein localises to the lysosome. Its function is as follows. Cysteine proteinases 1 and 2 are believed to participate in the breakdown of protein during differentiation of Dictyostelium as a response to starvation. The sequence is that of Cysteine proteinase 1 (cprA) from Dictyostelium discoideum (Social amoeba).